A 596-amino-acid polypeptide reads, in one-letter code: DNA mismatch repair protein MutL (596 aa).

This sequence belongs to the DNA mismatch repair MutL/HexB family.

Functionally, this protein is involved in the repair of mismatches in DNA. It is required for dam-dependent methyl-directed DNA mismatch repair. May act as a 'molecular matchmaker', a protein that promotes the formation of a stable complex between two or more DNA-binding proteins in an ATP-dependent manner without itself being part of a final effector complex. The sequence is that of DNA mismatch repair protein MutL from Leptospira borgpetersenii serovar Hardjo-bovis (strain L550).